The following is a 453-amino-acid chain: UPF0210 protein Pcar_2119 (453 aa).

It belongs to the UPF0210 family. As to quaternary structure, homodimer.

The sequence is that of UPF0210 protein Pcar_2119 from Syntrophotalea carbinolica (strain DSM 2380 / NBRC 103641 / GraBd1) (Pelobacter carbinolicus).